Consider the following 358-residue polypeptide: MGKASGLLLFLLGFGFFVVTYNLLTLIVHNRSGVSNSDGSPLLDPVVQMPLNIRKAKSSPAPFHVALTATDAPYNKWQCRIMYYWYKQKKALPGSDMGGFTRILHSGNSDNLMDEIPTFVVDPLPPGLDRGYVVLNRPWAFVQWLERATIKEDYVLMAEPDHVFVNPLPNLAVGGFPAAFPFFYITPEKYENIVRKYYPAEMGPVTNIDPIGNSPVIISKESLEKIAPTWMNVSLTMKNDPETDKAFGWVLEMYGYAIASAIHGVRHILRKDFMLQPPWDLSTKGKFIIHYTYGCDYNMKGELTYGKIGEWRFDKRSHLRGPPPRNMSLPPPGVPESVVTLVKMVNEATATIPNWDTL.

A helical; Signal-anchor transmembrane segment spans residues 8-28 (LLFLLGFGFFVVTYNLLTLIV).

Ubiquitous.

It is found in the golgi apparatus. The protein resides in the cis-Golgi network membrane. It carries out the reaction trans-4-hydroxy-L-prolyl-[protein] + UDP-beta-L-arabinofuranose = O-(beta-L-arabinofuranosyl)-trans-4-hydroxy-L-prolyl-[protein] + UDP + H(+). Its function is as follows. Glycosyltransferase involved in the O-arabinosylation of several proteins including extensins and small signaling peptides. Catalyzes the transfer of the initial L-arabinose to the hydroxyl group of Hyp residues. Contributes redundantly with HPAT1 and HPAT2 to arabinosylation of EXT3, but main contributor to arabinosylation of CLE peptides. This chain is Hydroxyproline O-arabinosyltransferase 3, found in Arabidopsis thaliana (Mouse-ear cress).